The following is a 174-amino-acid chain: MTRILGIDPGSQRTGIGIIDIDEDGRSRHVHHAPLMLLGEGDFSQRLKRLLQGLGELIETYRPDEVAIERVFMGKSAASALKLGHARGAAICAVVMRDLPVHEYAATEVKLALVGKGGADKVQVQHMVGIMLNLKGKLQPDAADALAVAITHAHVRATAQRLGVNTQQAWSRKK.

Active-site residues include aspartate 8, glutamate 69, and aspartate 141. Positions 8, 69, and 141 each coordinate Mg(2+).

Belongs to the RuvC family. As to quaternary structure, homodimer which binds Holliday junction (HJ) DNA. The HJ becomes 2-fold symmetrical on binding to RuvC with unstacked arms; it has a different conformation from HJ DNA in complex with RuvA. In the full resolvosome a probable DNA-RuvA(4)-RuvB(12)-RuvC(2) complex forms which resolves the HJ. The cofactor is Mg(2+).

Its subcellular location is the cytoplasm. It catalyses the reaction Endonucleolytic cleavage at a junction such as a reciprocal single-stranded crossover between two homologous DNA duplexes (Holliday junction).. Its function is as follows. The RuvA-RuvB-RuvC complex processes Holliday junction (HJ) DNA during genetic recombination and DNA repair. Endonuclease that resolves HJ intermediates. Cleaves cruciform DNA by making single-stranded nicks across the HJ at symmetrical positions within the homologous arms, yielding a 5'-phosphate and a 3'-hydroxyl group; requires a central core of homology in the junction. The consensus cleavage sequence is 5'-(A/T)TT(C/G)-3'. Cleavage occurs on the 3'-side of the TT dinucleotide at the point of strand exchange. HJ branch migration catalyzed by RuvA-RuvB allows RuvC to scan DNA until it finds its consensus sequence, where it cleaves and resolves the cruciform DNA. The protein is Crossover junction endodeoxyribonuclease RuvC of Xanthomonas euvesicatoria pv. vesicatoria (strain 85-10) (Xanthomonas campestris pv. vesicatoria).